The following is a 264-amino-acid chain: Low molecular mass lipoprotein PBMHPC-23 (264 aa).

A signal peptide spans 1–23; the sequence is MKFLVVFAVVRACVTPACAEMSA.

This sequence belongs to the 30 kDa lipoprotein family.

The protein resides in the secreted. This chain is Low molecular mass lipoprotein PBMHPC-23, found in Bombyx mori (Silk moth).